A 274-amino-acid chain; its full sequence is MAIVKCKPTSAGRRFVVKVVNQELHKGAPYAPLLEKKSKSGGRNNNGRITTRHIGGGHKQHYRLVDFRRNDKDGIPATVERVEYDPNRTAHIALLKYADGERRYIIAPKGVVAGDQLVAGNMAPIKPGNSLQLRNIPVGSTVHGIELKPGKGAQIARSAGASAQLIAREGAYVTLRLRSGEMRKVLAECRATLGEVSNSEHSLRSLGKAGAKRWRGVRPTVRGVAMNPVDHPHGGGEGRTSGGRHPVSPWGFPTKGAKTRANKRTDNMIVRRRK.

Disordered stretches follow at residues 34–54 (LEKK…TRHI) and 224–261 (VAMN…KTRA).

The protein belongs to the universal ribosomal protein uL2 family. In terms of assembly, part of the 50S ribosomal subunit. Forms a bridge to the 30S subunit in the 70S ribosome.

One of the primary rRNA binding proteins. Required for association of the 30S and 50S subunits to form the 70S ribosome, for tRNA binding and peptide bond formation. It has been suggested to have peptidyltransferase activity; this is somewhat controversial. Makes several contacts with the 16S rRNA in the 70S ribosome. This Ectopseudomonas mendocina (strain ymp) (Pseudomonas mendocina) protein is Large ribosomal subunit protein uL2.